The sequence spans 413 residues: Gamma-glutamyl phosphate reductase (413 aa).

It belongs to the gamma-glutamyl phosphate reductase family.

Its subcellular location is the cytoplasm. It catalyses the reaction L-glutamate 5-semialdehyde + phosphate + NADP(+) = L-glutamyl 5-phosphate + NADPH + H(+). The protein operates within amino-acid biosynthesis; L-proline biosynthesis; L-glutamate 5-semialdehyde from L-glutamate: step 2/2. In terms of biological role, catalyzes the NADPH-dependent reduction of L-glutamate 5-phosphate into L-glutamate 5-semialdehyde and phosphate. The product spontaneously undergoes cyclization to form 1-pyrroline-5-carboxylate. The polypeptide is Gamma-glutamyl phosphate reductase (Geobacillus sp. (strain WCH70)).